Reading from the N-terminus, the 295-residue chain is Inorganic pyrophosphatase 1 (295 aa).

The active-site Nucleophile is aspartate 19. Aspartate 19 and aspartate 21 together coordinate Mg(2+). Aspartate 21 acts as the Proton donor in catalysis. Substrate is bound by residues aspartate 30 and aspartate 105. Position 190 (aspartate 190) interacts with Mg(2+).

The protein belongs to the HAD-like hydrolase superfamily. Tetramer. It depends on Mg(2+) as a cofactor. Requires Fe(2+) as cofactor. Ni(2+) serves as cofactor. The cofactor is Co(2+). Mn(2+) is required as a cofactor.

The catalysed reaction is diphosphate + H2O = 2 phosphate + H(+). Catalyzes the specific cleavage of pyrophosphate. The protein is Inorganic pyrophosphatase 1 (PS2) of Arabidopsis thaliana (Mouse-ear cress).